We begin with the raw amino-acid sequence, 115 residues long: Photosystem II reaction center Psb28 protein (115 aa).

The protein belongs to the Psb28 family. In terms of assembly, part of the photosystem II complex.

Its subcellular location is the plastid. It localises to the chloroplast thylakoid membrane. This is Photosystem II reaction center Psb28 protein from Pyropia yezoensis (Susabi-nori).